Here is a 231-residue protein sequence, read N- to C-terminus: Cytidylate kinase (231 aa).

18 to 26 (GPSGTGKSS) contributes to the ATP binding site.

The protein belongs to the cytidylate kinase family. Type 1 subfamily.

The protein localises to the cytoplasm. The enzyme catalyses CMP + ATP = CDP + ADP. It catalyses the reaction dCMP + ATP = dCDP + ADP. The protein is Cytidylate kinase of Streptomyces avermitilis (strain ATCC 31267 / DSM 46492 / JCM 5070 / NBRC 14893 / NCIMB 12804 / NRRL 8165 / MA-4680).